The chain runs to 590 residues: Myo-inositol transporter 3 (590 aa).

Positions 1 to 26 (MRTTHIEDRDNNSLENKHTDHIEGVE) are enriched in basic and acidic residues. Residues 1–40 (MRTTHIEDRDNNSLENKHTDHIEGVENGKGTQEPPSPSGF) are disordered. Topologically, residues 1–57 (MRTTHIEDRDNNSLENKHTDHIEGVENGKGTQEPPSPSGFGGHLIDENLVHVEGEDK) are cytoplasmic. The helical transmembrane segment at 58–78 (VTWYLCFLISASAIAGFLFGY) threads the bilayer. At 79–105 (DTGVVGVALPLVGTDLGGNELNSSQQE) the chain is on the extracellular side. An N-linked (GlcNAc...) asparagine glycan is attached at Asn100. The helical transmembrane segment at 106 to 126 (IITAGTTIGAIFGSAILGGWG) threads the bilayer. Over 127–132 (DHLGRK) the chain is Cytoplasmic. Residues 133–153 (MAILISDVFFTVGAVIIASSY) traverse the membrane as a helical segment. Residues 154–157 (SVPQ) are Extracellular-facing. The helical transmembrane segment at 158-178 (IIVGRIVLGVGVGGAAVIAPL) threads the bilayer. Residues 179–192 (FITETAPTAVRGRC) lie on the Cytoplasmic side of the membrane. A helical membrane pass occupies residues 193–213 (IGVNAFFIPFGQLVADSIGAG). Residues 214-222 (VQNMHGGWR) lie on the Extracellular side of the membrane. Residues 223-243 (LLFALGAVPSLIQLLLFHYLP) traverse the membrane as a helical segment. Residues 244 to 325 (ESPRILIVKG…AVSVLQAAGQ (82 aa)) are Cytoplasmic-facing. Residues 326-346 (LCGFNTLLYYAGTLFGLLGLS) form a helical membrane-spanning segment. Residues 347-349 (NPA) are Extracellular-facing. The helical transmembrane segment at 350–370 (LGGLIPAGTNAVFVLIGMSTV) threads the bilayer. Topologically, residues 371–376 (DKIGRR) are cytoplasmic. The helical transmembrane segment at 377–397 (GLLLVGVPVLLLGLVWNIIGF) threads the bilayer. Residues 398-420 (YYMCKPTGGFLDTSYSYDTTNVG) lie on the Extracellular side of the membrane. A helical transmembrane segment spans residues 421–441 (IVIGGIVFYVAGFGLTYSHLV). Topologically, residues 442–455 (WYQAEYLALEVRSM) are cytoplasmic. A helical membrane pass occupies residues 456 to 476 (GSGVATTVCWIANLVVSVSYL). Residues 477-485 (SELETMTPS) are Extracellular-facing. Residues 486-506 (GTYGFYLGLSVIAFVFVVFCF) traverse the membrane as a helical segment. At 507 to 590 (PETKQLSIDE…GGKRKPQVLV (84 aa)) the chain is on the cytoplasmic side.

This sequence belongs to the major facilitator superfamily. Sugar transporter (TC 2.A.1.1) family.

The protein resides in the cell membrane. The enzyme catalyses myo-inositol(out) + H(+)(out) = myo-inositol(in) + H(+)(in). In terms of biological role, transporter for myo-inositol. The chain is Myo-inositol transporter 3 from Cryptococcus neoformans var. grubii serotype A (strain H99 / ATCC 208821 / CBS 10515 / FGSC 9487) (Filobasidiella neoformans var. grubii).